Here is a 602-residue protein sequence, read N- to C-terminus: Aspartate--tRNA(Asp/Asn) ligase (602 aa).

Glu-187 contributes to the L-aspartate binding site. Residues 211 to 214 (QQFK) form an aspartate region. L-aspartate-binding residues include Arg-233 and His-461. Residue 233-235 (RDE) coordinates ATP. Glu-495 provides a ligand contact to ATP. An L-aspartate-binding site is contributed by Arg-502. Residue 547 to 550 (GLDR) participates in ATP binding.

This sequence belongs to the class-II aminoacyl-tRNA synthetase family. Type 1 subfamily. Homodimer.

It localises to the cytoplasm. The catalysed reaction is tRNA(Asx) + L-aspartate + ATP = L-aspartyl-tRNA(Asx) + AMP + diphosphate. In terms of biological role, aspartyl-tRNA synthetase with relaxed tRNA specificity since it is able to aspartylate not only its cognate tRNA(Asp) but also tRNA(Asn). Reaction proceeds in two steps: L-aspartate is first activated by ATP to form Asp-AMP and then transferred to the acceptor end of tRNA(Asp/Asn). This chain is Aspartate--tRNA(Asp/Asn) ligase, found in Chlorobium phaeovibrioides (strain DSM 265 / 1930) (Prosthecochloris vibrioformis (strain DSM 265)).